The following is a 652-amino-acid chain: Zinc finger protein 503 (652 aa).

Residues 1-11 (MSTAPSLSALR) show a composition bias toward polar residues. The tract at residues 1–72 (MSTAPSLSAL…HAVPPSDPLR (72 aa)) is disordered. The segment covering 16–32 (SGGGGGGGGGGGSGGGS) has biased composition (gly residues). Serine 107 carries the post-translational modification Phosphoserine. 2 disordered regions span residues 126–283 (SQIG…GVPA) and 296–338 (INVD…SSVL). Residues 135-144 (PSSKLSSVAS) are compositionally biased toward low complexity. Gly residues-rich tracts occupy residues 145–157 (NGGGAGGAGNGAG) and 194–209 (GGGGGGGGGGGGGGGV). Lysine 213 carries the post-translational modification N6-acetyllysine. Positions 221–230 (ATCQPFTPRT) are enriched in polar residues. Positions 231–244 (GSPSSSASACSPGG) are enriched in low complexity. Serine 235 and serine 241 each carry phosphoserine. A compositionally biased stretch (basic and acidic residues) spans 254-263 (EGKDDKKDPE). Gly residues predominate over residues 264–283 (AGGGGSSKGSGGASADGVPA). The segment covering 314–336 (GSDCGGSSSSSSGSGPSAPTSSS) has biased composition (low complexity). The C2H2-type zinc finger occupies 520–548 (HICNWVSANGPCDKRFATSEELLSHLRTH). Arginine 642 is modified (omega-N-methylarginine).

The protein belongs to the Elbow/Noc family.

Its subcellular location is the nucleus. Functionally, may function as a transcriptional repressor. This is Zinc finger protein 503 (Znf503) from Mus musculus (Mouse).